The sequence spans 104 residues: Thioredoxin-3 (104 aa).

The Thioredoxin domain occupies 2–104 (SKVIHVTSNE…TLRSTLEANI (103 aa)). Catalysis depends on nucleophile residues Cys31 and Cys34. A disulfide bond links Cys31 and Cys34.

It belongs to the thioredoxin family.

In terms of biological role, participates in various redox reactions through the reversible oxidation of its active center dithiol to a disulfide and catalyzes dithiol-disulfide exchange reactions. This is Thioredoxin-3 (trxC) from Dictyostelium discoideum (Social amoeba).